A 62-amino-acid chain; its full sequence is MARYRHSRSRSRSRYRRRRRRRSRYRSRRRRSRGRRRRRSRRGRRRRGYSRRRYSRRRRRRY.

The tract at residues 1–62 (MARYRHSRSR…RYSRRRRRRY (62 aa)) is disordered.

This sequence belongs to the protamine P1 family. Testis.

The protein localises to the nucleus. It localises to the chromosome. Its function is as follows. Protamines substitute for histones in the chromatin of sperm during the haploid phase of spermatogenesis. They compact sperm DNA into a highly condensed, stable and inactive complex. The protein is Sperm protamine P1 (PRM1) of Notamacropus eugenii (Tammar wallaby).